The primary structure comprises 150 residues: MEKKIAVTAGTFDLLHPGHFNTLNFAKKHADELVVIIARDETVKKIKGRSPVIPEEQRKIMIEALKPVDRAVLGSLTNKLEPILEIRPDIIVLGPDQTTYQITELKSQLAKHFLYPEVLKVEEYVRCPFHSSFDILKEIVRRWCCKELKV.

Residues 11–12 (TF), 16–19 (HPGH), D96, and Y124 contribute to the ATP site.

It belongs to the archaeal FAD synthase family. As to quaternary structure, homodimer. A divalent metal cation is required as a cofactor.

The catalysed reaction is FMN + ATP + H(+) = FAD + diphosphate. It participates in cofactor biosynthesis; FAD biosynthesis; FAD from FMN: step 1/1. Functionally, catalyzes the transfer of the AMP portion of ATP to flavin mononucleotide (FMN) to produce flavin adenine dinucleotide (FAD) coenzyme. In Methanococcus maripaludis (strain C7 / ATCC BAA-1331), this protein is FAD synthase.